The chain runs to 37 residues: Cytochrome b6-f complex subunit 5 (37 aa).

The helical transmembrane segment at phenylalanine 5–alanine 25 threads the bilayer.

The protein belongs to the PetG family. As to quaternary structure, the 4 large subunits of the cytochrome b6-f complex are cytochrome b6, subunit IV (17 kDa polypeptide, PetD), cytochrome f and the Rieske protein, while the 4 small subunits are PetG, PetL, PetM and PetN. The complex functions as a dimer.

It is found in the plastid. Its subcellular location is the chloroplast thylakoid membrane. In terms of biological role, component of the cytochrome b6-f complex, which mediates electron transfer between photosystem II (PSII) and photosystem I (PSI), cyclic electron flow around PSI, and state transitions. PetG is required for either the stability or assembly of the cytochrome b6-f complex. In Capsella bursa-pastoris (Shepherd's purse), this protein is Cytochrome b6-f complex subunit 5.